The following is a 120-amino-acid chain: MLKLFAKYTSIGVLNTLIHWVVFGVCIYVAHTNQALANFAGFVVAVSFSFFANAKFTFKASTTTMRYMLYVGFMGTLSATVGWAADRCALPPMITLVTFSAISLVCGFVYSKFIVFRDAK.

Residues 1–9 (MLKLFAKYT) are Cytoplasmic-facing. Residues 10–30 (SIGVLNTLIHWVVFGVCIYVA) form a helical membrane-spanning segment. Topologically, residues 31-33 (HTN) are periplasmic. The chain crosses the membrane as a helical span at residues 34–54 (QALANFAGFVVAVSFSFFANA). The Cytoplasmic portion of the chain corresponds to 55–64 (KFTFKASTTT). Residues 65 to 85 (MRYMLYVGFMGTLSATVGWAA) form a helical membrane-spanning segment. Residues 86-88 (DRC) lie on the Periplasmic side of the membrane. Residues 89-109 (ALPPMITLVTFSAISLVCGFV) form a helical membrane-spanning segment. Residues 110-120 (YSKFIVFRDAK) are Cytoplasmic-facing.

Belongs to the GtrA family.

The protein localises to the cell inner membrane. Its function is as follows. Involved in O antigen modification. Involved in the translocation of bactoprenol-linked glucose across the cytoplasmic membrane. This chain is Prophage bactoprenol-linked glucose translocase homolog (yfdG), found in Escherichia coli (strain K12).